The sequence spans 62 residues: Large ribosomal subunit protein bL28 (62 aa).

Belongs to the bacterial ribosomal protein bL28 family.

This chain is Large ribosomal subunit protein bL28, found in Thermobifida fusca (strain YX).